Here is a 192-residue protein sequence, read N- to C-terminus: Fe/S biogenesis protein NfuA (192 aa).

2 residues coordinate [4Fe-4S] cluster: C149 and C152.

This sequence belongs to the NfuA family. Homodimer. [4Fe-4S] cluster serves as cofactor.

Functionally, involved in iron-sulfur cluster biogenesis. Binds a 4Fe-4S cluster, can transfer this cluster to apoproteins, and thereby intervenes in the maturation of Fe/S proteins. Could also act as a scaffold/chaperone for damaged Fe/S proteins. In Idiomarina loihiensis (strain ATCC BAA-735 / DSM 15497 / L2-TR), this protein is Fe/S biogenesis protein NfuA.